The following is a 308-amino-acid chain: 3'(2'),5'-bisphosphate nucleotidase 1 (308 aa).

Ala2 is subject to N-acetylalanine. The active-site Proton acceptor is the Asp51. The Mg(2+) site is built by Glu74, Asp117, Leu119, and Asp120. The active-site Proton acceptor is the Thr122. Thr122 is subject to Phosphothreonine. Positions 195, 198, 220, and 224 each coordinate AMP. The residue at position 240 (Ser240) is a Phosphoserine. An N6-succinyllysine modification is found at Lys244. Position 247 (Asp247) interacts with Mg(2+).

It belongs to the inositol monophosphatase superfamily. It depends on Mg(2+) as a cofactor. Widely expressed. Highly expressed in kidney.

It carries out the reaction adenosine 3',5'-bisphosphate + H2O = AMP + phosphate. The catalysed reaction is adenosine 2',5'-bisphosphate + H2O = AMP + phosphate. It catalyses the reaction 3'-phosphoadenylyl sulfate + H2O = adenosine 5'-phosphosulfate + phosphate. The enzyme catalyses 1D-myo-inositol 1,4-bisphosphate + H2O = 1D-myo-inositol 4-phosphate + phosphate. It carries out the reaction 1D-myo-inositol 1,3,4-trisphosphate + H2O = 1D-myo-inositol 3,4-bisphosphate + phosphate. Its activity is regulated as follows. Uncompetitively inhibited by Li(+) (IC(50)=157 uM). PAP hydrolysis is competitively inhibited by PAPS (IC(50)=0.7 uM) and by inositol 1,4-bisphosphate (IC(50)=15 uM). Phosphatase that converts 3'(2')-phosphoadenosine 5'-phosphate (PAP) to AMP and adenosine 3'-phosphate 5'-phosphosulfate (PAPS) to adenosine 5'-phosphosulfate (APS). Is also able to hydrolyze inositol 1,4-bisphosphate (Ins(1,4)P2) and inositol 1,3,4-trisphosphate (Ins(1,3,4)P3), and is not active on Ins(1)P, Ins(4)P, Ins(3,4)P2, Ins(1,4,5)P3, Ins(1,3,4,5)P4, Ins(1,3,4,5,6)P5 or InsP6. Probably prevents the toxic accumulation of PAP, a compound which inhibits a variety of proteins, including PAPS-utilizing enzymes such as sulfotransferases, and RNA processing enzymes. Could also play a role in inositol recycling and phosphoinositide metabolism. The sequence is that of 3'(2'),5'-bisphosphate nucleotidase 1 (Bpnt1) from Mus musculus (Mouse).